A 342-amino-acid polypeptide reads, in one-letter code: tRNA dimethylallyltransferase (342 aa).

The segment covering 1–13 (MNDTTAKTLNCSP) has biased composition (polar residues). A disordered region spans residues 1–21 (MNDTTAKTLNCSPASRDGFPE). 40 to 47 (GPTGVGKT) provides a ligand contact to ATP. A substrate-binding site is contributed by 42 to 47 (TGVGKT). Interaction with substrate tRNA regions lie at residues 65-68 (DSMQ) and 189-193 (QRILR).

This sequence belongs to the IPP transferase family. Monomer. Requires Mg(2+) as cofactor.

It catalyses the reaction adenosine(37) in tRNA + dimethylallyl diphosphate = N(6)-dimethylallyladenosine(37) in tRNA + diphosphate. In terms of biological role, catalyzes the transfer of a dimethylallyl group onto the adenine at position 37 in tRNAs that read codons beginning with uridine, leading to the formation of N6-(dimethylallyl)adenosine (i(6)A). The chain is tRNA dimethylallyltransferase from Syntrophobacter fumaroxidans (strain DSM 10017 / MPOB).